The chain runs to 201 residues: Glycerol-3-phosphate acyltransferase (201 aa).

The next 6 membrane-spanning stretches (helical) occupy residues M10–L30, L60–A80, A86–F106, L116–V136, L139–L159, and A166–I186.

The protein belongs to the PlsY family. In terms of assembly, probably interacts with PlsX.

The protein localises to the cell inner membrane. The enzyme catalyses an acyl phosphate + sn-glycerol 3-phosphate = a 1-acyl-sn-glycero-3-phosphate + phosphate. The protein operates within lipid metabolism; phospholipid metabolism. In terms of biological role, catalyzes the transfer of an acyl group from acyl-phosphate (acyl-PO(4)) to glycerol-3-phosphate (G3P) to form lysophosphatidic acid (LPA). This enzyme utilizes acyl-phosphate as fatty acyl donor, but not acyl-CoA or acyl-ACP. This Brucella suis (strain ATCC 23445 / NCTC 10510) protein is Glycerol-3-phosphate acyltransferase.